Consider the following 408-residue polypeptide: Argininosuccinate synthase (408 aa).

ATP is bound by residues 10-18 (AYSGGLDTS) and Ala37. L-citrulline is bound by residues Tyr90 and Ser95. Gly120 is an ATP binding site. Positions 122, 126, and 127 each coordinate L-aspartate. Position 126 (Asn126) interacts with L-citrulline. L-citrulline is bound by residues Arg130, Ser181, Ser190, Glu266, and Tyr278.

This sequence belongs to the argininosuccinate synthase family. Type 1 subfamily. Homotetramer.

The protein localises to the cytoplasm. It carries out the reaction L-citrulline + L-aspartate + ATP = 2-(N(omega)-L-arginino)succinate + AMP + diphosphate + H(+). It participates in amino-acid biosynthesis; L-arginine biosynthesis; L-arginine from L-ornithine and carbamoyl phosphate: step 2/3. This is Argininosuccinate synthase from Chromobacterium violaceum (strain ATCC 12472 / DSM 30191 / JCM 1249 / CCUG 213 / NBRC 12614 / NCIMB 9131 / NCTC 9757 / MK).